The sequence spans 587 residues: Barrierpepsin (587 aa).

The first 24 residues, 1–24, serve as a signal peptide directing secretion; it reads MSAINHLCLKLILASFAIINTITA. A Peptidase A1 domain is found at 45–393; the sequence is YATTLDIGTP…DLDNYKISLA (349 aa). D63 is an active-site residue. Residues N84, N90, and N268 are each glycosylated (N-linked (GlcNAc...) asparagine). D287 is a catalytic residue. N-linked (GlcNAc...) asparagine glycosylation occurs at N308. C322 and C358 are oxidised to a cystine. Residues N366, N398, N468, N503, and N551 are each glycosylated (N-linked (GlcNAc...) asparagine). Residues 466–505 are disordered; the sequence is SRNCSTKMPGTRSTTVLSKPTQNSAMHQSTGAVTQTSNET.

The protein belongs to the peptidase A1 family.

It is found in the secreted. It catalyses the reaction Selective cleavage of 6-Leu-|-Lys-7 bond in the pheromone alpha-mating factor.. This protein called 'barrier activity' is excreted by yeast cells mating type a. It is probably a protease that cleaves alpha-factor and thus acts as an antagonist of this mating pheromone and establishes optimal pheromone concentration for conjugation. The polypeptide is Barrierpepsin (BAR1) (Saccharomyces cerevisiae (strain ATCC 204508 / S288c) (Baker's yeast)).